We begin with the raw amino-acid sequence, 761 residues long: 52 kDa repressor of the inhibitor of the protein kinase (761 aa).

The segment at 1 to 86 (MPNFCAAPNC…LRDNAIPTIF (86 aa)) adopts a THAP-type zinc-finger fold. Basic and acidic residues predominate over residues 116-132 (QKKIDETSEQEQKHKET). The disordered stretch occupies residues 116 to 149 (QKKIDETSEQEQKHKETNNSNAQNPSEEEGEGQD). Ser566 is subject to Phosphoserine.

As to quaternary structure, interacts with DNAJC3, probably sequestring it.

In terms of biological role, upstream regulator of interferon-induced serine/threonine protein kinase R (PKR). May block the PKR-inhibitory function of DNAJC3, resulting in restoration of kinase activity and suppression of cell growth. The chain is 52 kDa repressor of the inhibitor of the protein kinase from Homo sapiens (Human).